Reading from the N-terminus, the 426-residue chain is Tyrosine--tRNA ligase (426 aa).

Y35 is a binding site for L-tyrosine. The 'HIGH' region motif lies at 40–49; the sequence is PTADSLHIGH. The L-tyrosine site is built by Y172 and Q176. The short motif at 232-236 is the 'KMSKS' region element; sequence KLGKS. K235 provides a ligand contact to ATP. Positions 357–414 constitute an S4 RNA-binding domain; the sequence is ENIKDILVNSKLSKSKNNAKSVILSSSIRINNKKQKSIDFMFKKEDKLFNLFTLIKKG.

This sequence belongs to the class-I aminoacyl-tRNA synthetase family. TyrS type 1 subfamily. As to quaternary structure, homodimer.

It localises to the cytoplasm. It carries out the reaction tRNA(Tyr) + L-tyrosine + ATP = L-tyrosyl-tRNA(Tyr) + AMP + diphosphate + H(+). Catalyzes the attachment of tyrosine to tRNA(Tyr) in a two-step reaction: tyrosine is first activated by ATP to form Tyr-AMP and then transferred to the acceptor end of tRNA(Tyr). This Wigglesworthia glossinidia brevipalpis protein is Tyrosine--tRNA ligase.